We begin with the raw amino-acid sequence, 129 residues long: Large ribosomal subunit protein bL12c (129 aa).

The protein belongs to the bacterial ribosomal protein bL12 family. As to quaternary structure, homodimer. Part of the ribosomal stalk of the 50S ribosomal subunit. Forms a multimeric L10(L12)X complex, where L10 forms an elongated spine to which 2 to 4 L12 dimers bind in a sequential fashion. Binds GTP-bound translation factors.

Its subcellular location is the plastid. The protein localises to the chloroplast. In terms of biological role, forms part of the ribosomal stalk which helps the ribosome interact with GTP-bound translation factors. Is thus essential for accurate translation. The sequence is that of Large ribosomal subunit protein bL12c from Oltmannsiellopsis viridis (Marine flagellate).